The primary structure comprises 492 residues: Catalase isozyme B (492 aa).

A disordered region spans residues 1 to 20 (MDPYKHRPSSGSNSTFWTTN). Over residues 9-20 (SSGSNSTFWTTN) the composition is skewed to polar residues. Residue Arg62 coordinates heme. Residue His65 is part of the active site. Arg102 is a binding site for heme. Asn138 is an active-site residue. Phe151 serves as a coordination point for heme. The residue at position 210 (Tyr210) is a Phosphotyrosine. Residues 325 to 348 (CPAIIVPGIHYSDDKLLQTRIFSY) constitute a cross-link (3-(S-cysteinyl)-tyrosine (Cys-Tyr)). Heme contacts are provided by Arg344, Tyr348, and Arg355. Positions 484–492 (SRLNLKPNM) match the Peroxisome targeting signal motif.

This sequence belongs to the catalase family. In terms of assembly, homotetramer. Interacts with GLO1 and GLO4; these interactions are disturbed by alpha-hydroxy-2-pyridinemethanesulfonic acid (HPMS) and salicylic acid (SA). Interacts with STRK1 at the plasma membrane. Heme serves as cofactor. As to expression, predominantly expressed in roots and, at low levels, in leaves (e.g. sheaths). Detected in seeds. Also present in panicles and culms. Observed in stems and anthers.

Its subcellular location is the peroxisome. The protein resides in the glyoxysome. The protein localises to the cell membrane. The enzyme catalyses 2 H2O2 = O2 + 2 H2O. Its activity is regulated as follows. Strongly inhibited by beta-mercaptoethanol, sodium azide and potassium cyanide. Slightly repressed by 3-amino-1,2,4-triazole (3-AT). Activity is repressed proportionally to increased concentration of NaCl, KCl, LiCl and MgCl(2). Occurs in almost all aerobically respiring organisms and serves to protect cells from the toxic effects of hydrogen peroxide. May prevent the excessive accumulation of H(2)O(2) during water stress in response to the accumulation of abscisic acid (ABA). Involved in the modulation of ROS levels related to root growth regulation. Required for pollen viability and floret fertility upon heat stress (HS) by detoxifying reactive oxygen species (ROS) and malondialdehyde (MDA) accumulation in developing anthers exposed to HS. In Oryza sativa subsp. japonica (Rice), this protein is Catalase isozyme B (CATB).